Reading from the N-terminus, the 139-residue chain is MATNRTFTMIKPDAVANGHIGNILAMITNGGFKIVSLKLTQLTVADAKAFYAVHAERPFYGELVEFMSRGPIVAAILEKDNAVEDFRTLIGATNPAEAAEGTIRKAYATSIGENAVHGSDSDENAAIESAFHFAGREQF.

6 residues coordinate ATP: Lys11, Phe59, Arg87, Thr93, Arg104, and Asn114. Residue His117 is the Pros-phosphohistidine intermediate of the active site.

The protein belongs to the NDK family. Homotetramer. It depends on Mg(2+) as a cofactor.

Its subcellular location is the cytoplasm. The catalysed reaction is a 2'-deoxyribonucleoside 5'-diphosphate + ATP = a 2'-deoxyribonucleoside 5'-triphosphate + ADP. It carries out the reaction a ribonucleoside 5'-diphosphate + ATP = a ribonucleoside 5'-triphosphate + ADP. Major role in the synthesis of nucleoside triphosphates other than ATP. The ATP gamma phosphate is transferred to the NDP beta phosphate via a ping-pong mechanism, using a phosphorylated active-site intermediate. This Flavobacterium johnsoniae (strain ATCC 17061 / DSM 2064 / JCM 8514 / BCRC 14874 / CCUG 350202 / NBRC 14942 / NCIMB 11054 / UW101) (Cytophaga johnsonae) protein is Nucleoside diphosphate kinase.